The chain runs to 249 residues: 5'-nucleotidase SurE 2 (249 aa).

4 residues coordinate a divalent metal cation: Asp8, Asp9, Ser40, and Asn90.

It belongs to the SurE nucleotidase family. Requires a divalent metal cation as cofactor.

The protein localises to the cytoplasm. It carries out the reaction a ribonucleoside 5'-phosphate + H2O = a ribonucleoside + phosphate. Its function is as follows. Nucleotidase that shows phosphatase activity on nucleoside 5'-monophosphates. This is 5'-nucleotidase SurE 2 from Pyrobaculum aerophilum (strain ATCC 51768 / DSM 7523 / JCM 9630 / CIP 104966 / NBRC 100827 / IM2).